We begin with the raw amino-acid sequence, 521 residues long: Interleukin-9 receptor (521 aa).

An N-terminal signal peptide occupies residues 1–40 (MGLGRCIWEGWTLESEALRRDMGTWLLACICICTCVCLGV). Residues 41–270 (SVTGEGQGPR…GPLIPPWGWP (230 aa)) lie on the Extracellular side of the membrane. N-linked (GlcNAc...) asparagine glycans are attached at residues N117 and N156. The 111-residue stretch at 149-259 (PPSDLQSNIS…QPVCFQAPQR (111 aa)) folds into the Fibronectin type-III domain. A WSXWS motif motif is present at residues 245 to 249 (WSEWS). A helical membrane pass occupies residues 271-291 (GNTLVAVSIFLLLTGPTYLLF). Residues 292–521 (KLSPRVKRIF…VLSKARSWTF (230 aa)) lie on the Cytoplasmic side of the membrane. The Box 1 motif motif lies at 301 to 309 (FYQNVPSPA). Positions 413-439 (WAPTSLTRPAPPDSEGSRSSSSSSSSN) are disordered. Over residues 429 to 439 (SRSSSSSSSSN) the composition is skewed to low complexity.

The protein belongs to the type I cytokine receptor family. Type 4 subfamily. In terms of assembly, interacts with IL9.

It is found in the cell membrane. The protein localises to the secreted. Functionally, plays an important role in the immune response against parasites by acting as a receptor of IL9. This chain is Interleukin-9 receptor (IL9R), found in Homo sapiens (Human).